Here is a 449-residue protein sequence, read N- to C-terminus: L-lysine-epsilon aminotransferase (449 aa).

Residues glycine 128 and alanine 129 each coordinate pyridoxal 5'-phosphate. Positions 170 and 274 each coordinate 2-oxoglutarate. Arginine 170 is an L-lysine binding site. Residue glutamine 274 participates in pyridoxal 5'-phosphate binding. Position 300 is an N6-(pyridoxal phosphate)lysine (lysine 300). 2-oxoglutarate is bound at residue arginine 422.

This sequence belongs to the class-III pyridoxal-phosphate-dependent aminotransferase family. Pyridoxal 5'-phosphate is required as a cofactor.

The enzyme catalyses L-lysine + 2-oxoglutarate = (S)-2-amino-6-oxohexanoate + L-glutamate. Functionally, catalyzes the transfer of the terminal amino group of L-lysine to alpha-ketoglutarate to yield L-glutamate and 2-aminoadipate 6-semialdehyde ((S)-2-amino-6-oxohexanoate), which is spontaneously converted to the dehydrated form 1-piperideine 6-carboxylate. This is L-lysine-epsilon aminotransferase from Mycobacterium bovis (strain ATCC BAA-935 / AF2122/97).